Here is a 598-residue protein sequence, read N- to C-terminus: Proline--tRNA ligase (598 aa).

This sequence belongs to the class-II aminoacyl-tRNA synthetase family. ProS type 1 subfamily. As to quaternary structure, homodimer.

The protein resides in the cytoplasm. The enzyme catalyses tRNA(Pro) + L-proline + ATP = L-prolyl-tRNA(Pro) + AMP + diphosphate. In terms of biological role, catalyzes the attachment of proline to tRNA(Pro) in a two-step reaction: proline is first activated by ATP to form Pro-AMP and then transferred to the acceptor end of tRNA(Pro). As ProRS can inadvertently accommodate and process non-cognate amino acids such as alanine and cysteine, to avoid such errors it has two additional distinct editing activities against alanine. One activity is designated as 'pretransfer' editing and involves the tRNA(Pro)-independent hydrolysis of activated Ala-AMP. The other activity is designated 'posttransfer' editing and involves deacylation of mischarged Ala-tRNA(Pro). The misacylated Cys-tRNA(Pro) is not edited by ProRS. This is Proline--tRNA ligase from Rippkaea orientalis (strain PCC 8801 / RF-1) (Cyanothece sp. (strain PCC 8801)).